The sequence spans 145 residues: MKFNPFVTSDRSKNRKRHFNAPSHIRRKIMSSPLSKELRQKYNVRSMPIRKDDEVQVVRGHYKGQQIGKVVQVYRKKYVIYIERVQREKANGTTVHVGIRPSKVVITRLKLDKDRKKILERKAKSRQVGKEKGKYKEETIEKMQE.

Disordered stretches follow at residues 1–21 and 122–145; these read MKFNPFVTSDRSKNRKRHFNA and KAKSRQVGKEKGKYKEETIEKMQE. K136 participates in a covalent cross-link: Glycyl lysine isopeptide (Lys-Gly) (interchain with G-Cter in SUMO2). Phosphothreonine is present on T139.

It belongs to the universal ribosomal protein uL24 family. Component of the large ribosomal subunit. Interacts with DHX33. In terms of processing, ufmylated by UFL1 in response to endoplasmic reticulum stress, promoting reticulophagy of endoplasmic reticulum sheets.

It is found in the cytoplasm. In terms of biological role, component of the large ribosomal subunit. The ribosome is a large ribonucleoprotein complex responsible for the synthesis of proteins in the cell. The sequence is that of Large ribosomal subunit protein uL24 (Rpl26) from Rattus norvegicus (Rat).